A 477-amino-acid chain; its full sequence is Dihydrolipoyl dehydrogenase (477 aa).

FAD is bound by residues Glu34–Cys49, Lys58, and Gly122. Residues Cys49 and Cys54 are joined by a disulfide bond. NAD(+)-binding positions include Gly188 to Ile192, Glu211, Val245, and Ala276 to Arg279. FAD contacts are provided by Asp319 and Ala327. Residue His451 is the Proton acceptor of the active site.

The protein belongs to the class-I pyridine nucleotide-disulfide oxidoreductase family. In terms of assembly, homodimer. FAD serves as cofactor.

It is found in the cytoplasm. The enzyme catalyses N(6)-[(R)-dihydrolipoyl]-L-lysyl-[protein] + NAD(+) = N(6)-[(R)-lipoyl]-L-lysyl-[protein] + NADH + H(+). The pyruvate dehydrogenase complex catalyzes the overall conversion of pyruvate to acetyl-CoA and CO(2). It contains multiple copies of three enzymatic components: pyruvate dehydrogenase (E1), dihydrolipoamide acetyltransferase (E2) and lipoamide dehydrogenase (E3). This chain is Dihydrolipoyl dehydrogenase, found in Azotobacter vinelandii.